The following is a 307-amino-acid chain: Beta-lactamase (307 aa).

Residues 1–34 constitute a signal peptide (tat-type signal); it reads MRNRGFGRRELLVAMAMLVSVTGCARHASGARPA. Residue S84 is the Acyl-ester intermediate of the active site. S142 lines the substrate pocket. The active-site Proton acceptor is the E182. 251-253 provides a ligand contact to substrate; sequence TGT.

This sequence belongs to the class-A beta-lactamase family. Monomer. Exported by the Tat system. The position of the signal peptide cleavage has not been experimentally proven.

It is found in the periplasm. The protein resides in the secreted. It carries out the reaction a beta-lactam + H2O = a substituted beta-amino acid. Its activity is regulated as follows. Is inhibited by clavulanate. In terms of biological role, extended spectrum beta-lactamase (ESBL) that inactivates beta-lactam antibiotics by hydrolyzing the amide group of the beta-lactam ring. Displays high levels of penicillinase and cephalosporinase activity as well as measurable activity with carbapenems, including imipenem and meropenem. Plays a primary role in the intrinsic resistance of mycobacteria to beta-lactam antibiotics. This chain is Beta-lactamase (blaC), found in Mycobacterium bovis (strain ATCC BAA-935 / AF2122/97).